Consider the following 306-residue polypeptide: MINSPPIGYLPGMRTMWRGAISFGLVNIGVRLYAATADHDYQFHQVHRQDHGRIHHKRVCEECGREIDYDDIVKGYETSDGELVVLDSQDLRKLPIRTDRAIDLLECVPAEQVDPTYFQKTYYLEPEKSARRPYVLLREALRRTDLLAVVKITMRQRETLATIRPAGDVLVLHTMLWPDEIRRPDFDFLTDDAGDTEVSKQEIDMATSLVENMTEDFDPTEFTDDYQRALAELIDAKTKGTKPPRKRPEPADEGEVVDLMGALERSVDQARTSRTSRRKTTASASRRRSSSNREKTGSRDKTRKRA.

The Ku domain occupies 21–206 (ISFGLVNIGV…EVSKQEIDMA (186 aa)). The disordered stretch occupies residues 233–306 (LIDAKTKGTK…GSRDKTRKRA (74 aa)). Residues 274–290 (RTSRRKTTASASRRRSS) show a composition bias toward basic residues. Residues 291–300 (SNREKTGSRD) are compositionally biased toward basic and acidic residues.

Belongs to the prokaryotic Ku family. In terms of assembly, homodimer. Interacts with LigD.

With LigD forms a non-homologous end joining (NHEJ) DNA repair enzyme, which repairs dsDNA breaks with reduced fidelity. Binds linear dsDNA with 5'- and 3'- overhangs but not closed circular dsDNA nor ssDNA. Recruits and stimulates the ligase activity of LigD. The sequence is that of Non-homologous end joining protein Ku 2 from Saccharopolyspora erythraea (strain ATCC 11635 / DSM 40517 / JCM 4748 / NBRC 13426 / NCIMB 8594 / NRRL 2338).